Here is a 630-residue protein sequence, read N- to C-terminus: 1-deoxy-D-xylulose-5-phosphate synthase (630 aa).

Residues His-87 and 128 to 130 contribute to the thiamine diphosphate site; that span reads GHS. Residue Asp-159 participates in Mg(2+) binding. Thiamine diphosphate contacts are provided by residues 160–161, Asn-188, Phe-295, and Glu-377; that span reads GA. Asn-188 serves as a coordination point for Mg(2+).

Belongs to the transketolase family. DXPS subfamily. As to quaternary structure, homodimer. The cofactor is Mg(2+). Thiamine diphosphate serves as cofactor.

It carries out the reaction D-glyceraldehyde 3-phosphate + pyruvate + H(+) = 1-deoxy-D-xylulose 5-phosphate + CO2. It participates in metabolic intermediate biosynthesis; 1-deoxy-D-xylulose 5-phosphate biosynthesis; 1-deoxy-D-xylulose 5-phosphate from D-glyceraldehyde 3-phosphate and pyruvate: step 1/1. In terms of biological role, catalyzes the acyloin condensation reaction between C atoms 2 and 3 of pyruvate and glyceraldehyde 3-phosphate to yield 1-deoxy-D-xylulose-5-phosphate (DXP). The chain is 1-deoxy-D-xylulose-5-phosphate synthase from Pseudomonas syringae pv. syringae (strain B728a).